The primary structure comprises 81 residues: Insulin-like growth factor 1 (81 aa).

The propeptide occupies 1-4; sequence FASA. The b stretch occupies residues 5-33; sequence GPETLCGAELVDALQFVCGDRGFYFNKPT. Cystine bridges form between Cys-10–Cys-52, Cys-22–Cys-65, and Cys-51–Cys-56. A c region spans residues 34 to 45; it reads GYGSSSRRAPQT. Residues 46–66 form an a region; the sequence is GIVDECCFRSCDLRRLEMYCA. Residues 67–74 form a d region; the sequence is PLKPAKAA. Positions 75–81 are cleaved as a propeptide — e peptide; it reads RSVRAQR.

Belongs to the insulin family. As to quaternary structure, forms a ternary complex with IGFR1 and ITGAV:ITGB3. Forms a ternary complex with IGFR1 and ITGA6:ITGB4.

It is found in the secreted. In terms of biological role, the insulin-like growth factors, isolated from plasma, are structurally and functionally related to insulin but have a much higher growth-promoting activity. May be a physiological regulator of [1-14C]-2-deoxy-D-glucose (2DG) transport and glycogen synthesis in osteoblasts. Stimulates glucose transport in bone-derived osteoblastic (PyMS) cells and is effective at much lower concentrations than insulin, not only regarding glycogen and DNA synthesis but also with regard to enhancing glucose uptake. May play a role in synapse maturation. Ca(2+)-dependent exocytosis of IGF1 is required for sensory perception of smell in the olfactory bulb. Acts as a ligand for IGF1R. Binds to the alpha subunit of IGF1R, leading to the activation of the intrinsic tyrosine kinase activity which autophosphorylates tyrosine residues in the beta subunit thus initiating a cascade of down-stream signaling events leading to activation of the PI3K-AKT/PKB and the Ras-MAPK pathways. Binds to integrins ITGAV:ITGB3 and ITGA6:ITGB4. Its binding to integrins and subsequent ternary complex formation with integrins and IGFR1 are essential for IGF1 signaling. Induces the phosphorylation and activation of IGFR1, MAPK3/ERK1, MAPK1/ERK2 and AKT1. As part of the MAPK/ERK signaling pathway, acts as a negative regulator of apoptosis in cardiomyocytes via promotion of STUB1/CHIP-mediated ubiquitination and degradation of ICER-type isoforms of CREM. The protein is Insulin-like growth factor 1 of Suncus murinus (Asian house shrew).